The following is a 132-amino-acid chain: MVMTDPIADMLTRIRNANMVRHEKLEIPASKLKREIAEILKREGFIRDVEFIEDNKQGIIRVFLKYGQNNERVITGLKRISKPGLRVYAKSNEVPRVLNGLGIAILSTSQGVLTDKEARAKQAGGEVLAYVW.

This sequence belongs to the universal ribosomal protein uS8 family. In terms of assembly, part of the 30S ribosomal subunit. Contacts proteins S5 and S12.

Its function is as follows. One of the primary rRNA binding proteins, it binds directly to 16S rRNA central domain where it helps coordinate assembly of the platform of the 30S subunit. The polypeptide is Small ribosomal subunit protein uS8 (Bacillus licheniformis (strain ATCC 14580 / DSM 13 / JCM 2505 / CCUG 7422 / NBRC 12200 / NCIMB 9375 / NCTC 10341 / NRRL NRS-1264 / Gibson 46)).